A 434-amino-acid chain; its full sequence is Ribosomal protein uS12 methylthiotransferase RimO (434 aa).

An MTTase N-terminal domain is found at Met1 to Gln107. [4Fe-4S] cluster-binding residues include Cys5, Cys41, Cys70, Cys145, Cys149, and Cys152. The 230-residue stretch at Thr131 to Leu360 folds into the Radical SAM core domain. Positions Gln363 to Val434 constitute a TRAM domain.

This sequence belongs to the methylthiotransferase family. RimO subfamily. Requires [4Fe-4S] cluster as cofactor.

The protein resides in the cytoplasm. It carries out the reaction L-aspartate(89)-[ribosomal protein uS12]-hydrogen + (sulfur carrier)-SH + AH2 + 2 S-adenosyl-L-methionine = 3-methylsulfanyl-L-aspartate(89)-[ribosomal protein uS12]-hydrogen + (sulfur carrier)-H + 5'-deoxyadenosine + L-methionine + A + S-adenosyl-L-homocysteine + 2 H(+). In terms of biological role, catalyzes the methylthiolation of an aspartic acid residue of ribosomal protein uS12. The polypeptide is Ribosomal protein uS12 methylthiotransferase RimO (Prochlorococcus marinus (strain SARG / CCMP1375 / SS120)).